Consider the following 1363-residue polypeptide: DNA-directed RNA polymerase subunit beta (1363 aa).

Belongs to the RNA polymerase beta chain family. As to quaternary structure, the RNAP catalytic core consists of 2 alpha, 1 beta, 1 beta' and 1 omega subunit. When a sigma factor is associated with the core the holoenzyme is formed, which can initiate transcription.

The enzyme catalyses RNA(n) + a ribonucleoside 5'-triphosphate = RNA(n+1) + diphosphate. In terms of biological role, DNA-dependent RNA polymerase catalyzes the transcription of DNA into RNA using the four ribonucleoside triphosphates as substrates. This is DNA-directed RNA polymerase subunit beta from Pelagibacter ubique (strain HTCC1062).